Reading from the N-terminus, the 1666-residue chain is Latent-transforming growth factor beta-binding protein 4 (1666 aa).

The first 24 residues, 1–24 (MRRPGLGGPCPLLLLLLLPAATSA), serve as a signal peptide directing secretion. The EGF-like 1 domain occupies 148 to 180 (ARVLCPLICHNGGVCVKPDRCLCPPDFAGKFCQ). 6 disulfides stabilise this stretch: Cys-152-Cys-162, Cys-156-Cys-168, Cys-170-Cys-179, Cys-288-Cys-310, Cys-297-Cys-323, and Cys-311-Cys-326. One can recognise a TB 1 domain in the interval 286-338 (GYCFRELRGSECASPLPGLRTQEVCCRGEGLAWGVHDCHPCAEHLRNSNQVSG). A glycan (N-linked (GlcNAc...) asparagine) is linked at Asn-351. Positions 356–396 (DVDECATGGRCQHGECANTRGGYTCVCPDGFLLDSSRSSCI) constitute an EGF-like 2; calcium-binding domain. 7 disulfides stabilise this stretch: Cys-360/Cys-371, Cys-366/Cys-380, Cys-382/Cys-395, Cys-408/Cys-430, Cys-417/Cys-443, Cys-431/Cys-446, and Cys-432/Cys-458. Positions 406–458 (GPCYRVLHDGGCSLPILRNITKQICCCSRVGKAWGRGCQLCPPYGSEGFREIC) constitute a TB 2 domain. An N-linked (GlcNAc...) asparagine glycan is attached at Asn-424. The segment at 473–590 (YNTRPLNQDP…EIPESGPSSS (118 aa)) is disordered. Residues 491-502 (RVPPATPRPPTG) are compositionally biased toward pro residues. Over residues 521–561 (PRPRPEPRPRPESRPRPEPRPRPEPRPQPESQPRPESRPRP) the composition is skewed to basic and acidic residues. Residues 562–573 (ESQPWPEFPLPS) are compositionally biased toward pro residues. Residues 579–590 (GPEIPESGPSSS) show a composition bias toward low complexity. The EGF-like 3 domain maps to 588 to 629 (SSSMCQRNPQVCGPGRCVPRPSGYTCACDPGFRLGPQGTRCI). 30 disulfides stabilise this stretch: Cys-592/Cys-604, Cys-599/Cys-613, Cys-615/Cys-628, Cys-634/Cys-646, Cys-641/Cys-655, Cys-657/Cys-670, Cys-676/Cys-688, Cys-683/Cys-697, Cys-699/Cys-712, Cys-718/Cys-730, Cys-725/Cys-739, Cys-741/Cys-750, Cys-757/Cys-769, Cys-764/Cys-778, Cys-780/Cys-793, Cys-799/Cys-811, Cys-806/Cys-820, Cys-822/Cys-835, Cys-881/Cys-893, Cys-887/Cys-902, Cys-904/Cys-918, Cys-924/Cys-936, Cys-930/Cys-945, Cys-947/Cys-960, Cys-966/Cys-977, Cys-972/Cys-986, Cys-988/Cys-1001, Cys-1095/Cys-1107, Cys-1101/Cys-1116, and Cys-1118/Cys-1131. The region spanning 630-671 (DIDECRRVPTPCAPGRCENTPGSFRCVCGTGFQAGPRATECL) is the EGF-like 4; calcium-binding domain. The region spanning 672–713 (DVDECRRVPPPCDRGRCENTPGSFLCVCPAGYQAAPHGASCQ) is the EGF-like 5; calcium-binding domain. The EGF-like 6; calcium-binding domain maps to 714 to 751 (DVDECTQSPGLCGRGVCENLPGSFRCVCPAGFRGSACE). In terms of domain architecture, EGF-like 7; calcium-binding spans 753–794 (DVDECAQQPPPCGPGRCDNTAGSFHCACPAGFRSRGPGAPCQ). Residues 795-836 (DVDECSRSPSPCAYGRCENTEGSFKCVCPTGFQPNAAGSECE) form the EGF-like 8; calcium-binding domain. The EGF-like 9; calcium-binding domain maps to 877 to 919 (DVDECSSGTPCGLHGQCTNTKGSFHCSCSTGYRAPSGQPGPCA). The EGF-like 10; calcium-binding domain occupies 920–961 (DINECLEGDFCFPHGECLNTDGSFTCTCAPGYRPGPRGASCL). Residues 962–1002 (DVDECSEEDLCQSGICTNTDGSFECICPPGHRAGPDLASCL) form the EGF-like 11; calcium-binding domain. Residues 1091–1132 (DVDECRNRSFCGAHAMCQNLPGSFQCVCDQGYEGARDGRHCV) form the EGF-like 12; calcium-binding domain. An N-linked (GlcNAc...) asparagine glycan is attached at Asn-1097. The disordered stretch occupies residues 1171–1221 (TGRCVPPRAPAGTFPGSQPQAPASPSLPARPPAPPPPRRPSPPRQGPVSSG). Over residues 1185–1197 (PGSQPQAPASPSL) the composition is skewed to low complexity. A compositionally biased stretch (pro residues) spans 1198–1215 (PARPPAPPPPRRPSPPRQ). One can recognise a TB 3 domain in the interval 1223–1277 (RECYFDTAAPDACDNILARNVTWQECCCTVGEGWGSGCRIQQCPGTETAEYQSLC). 10 disulfides stabilise this stretch: Cys-1225–Cys-1248, Cys-1235–Cys-1260, Cys-1249–Cys-1265, Cys-1250–Cys-1277, Cys-1299–Cys-1312, Cys-1307–Cys-1321, Cys-1323–Cys-1336, Cys-1342–Cys-1354, Cys-1349–Cys-1363, and Cys-1365–Cys-1378. Asn-1242 carries N-linked (GlcNAc...) asparagine glycosylation. Residues 1295 to 1337 (DVDECQLFQDQVCKSGVCVNTAPGYSCYCSNGFYYHAHRLECV) enclose the EGF-like 13; calcium-binding domain. Residues 1338-1379 (DNDECADEEPACEGGRCVNTVGSYHCTCEPPLVLDGSRRRCV) enclose the EGF-like 14; calcium-binding domain. Residue Asn-1381 is glycosylated (N-linked (GlcNAc...) asparagine). Residues 1391–1444 (GVCWQEVGPDLVCSRPRLDRQATYTECCCLYGEAWGMDCALCPAQDSDDFEALC) form the TB 4 domain. Disulfide bonds link Cys-1393-Cys-1417, Cys-1403-Cys-1429, Cys-1418-Cys-1432, and Cys-1419-Cys-1444. The segment covering 1488–1500 (VLPYDPYPPPPGP) has biased composition (pro residues). Residues 1488 to 1566 (VLPYDPYPPP…SSERGSYTGA (79 aa)) form a disordered region. Thr-1564 is modified (phosphothreonine). EGF-like domains are found at residues 1575 to 1615 (EAEE…MSCV) and 1616 to 1660 (DVNE…HHCA). 6 disulfide bridges follow: Cys-1579–Cys-1590, Cys-1585–Cys-1599, Cys-1601–Cys-1614, Cys-1620–Cys-1635, Cys-1630–Cys-1644, and Cys-1646–Cys-1659.

The protein belongs to the LTBP family. As to quaternary structure, forms part of the large latent transforming growth factor beta precursor complex; removal is essential for activation of complex. Interacts with LTBP1 and TGFB1. Interacts with EFEMP2; this interaction promotes fibrillar deposition of EFEMP2. Post-translationally, contains hydroxylated asparagine residues.

Its subcellular location is the secreted. The protein resides in the extracellular space. It is found in the extracellular matrix. Functionally, key regulator of transforming growth factor beta (TGFB1, TGFB2 and TGFB3) that controls TGF-beta activation by maintaining it in a latent state during storage in extracellular space. Associates specifically via disulfide bonds with the Latency-associated peptide (LAP), which is the regulatory chain of TGF-beta, and regulates integrin-dependent activation of TGF-beta. This Mus musculus (Mouse) protein is Latent-transforming growth factor beta-binding protein 4 (Ltbp4).